Consider the following 77-residue polypeptide: Apelin (77 aa).

The signal sequence occupies residues 1–22; that stretch reads MNLRLCVQALLLLWLSLTAVCG. Residues 23-41 constitute a propeptide that is removed on maturation; that stretch reads VPLMLPPDGTGLEEGSMRY. Positions 46–77 are disordered; sequence RTSRTGPGAWQGGRRKFRRQRPRLSHKGPMPF. Positions 58-71 are enriched in basic residues; it reads GRRKFRRQRPRLSH.

The protein belongs to the apelin family. In terms of processing, several active peptides may be produced by proteolytic processing of the peptide precursor. As to expression, expressed in extraembryonic visceral endoderm and in the primitive streak at 6.5 and 7.5 dpc. Expressed in the anterior visceral yolk sac at 8.25 dpc. Expressed weakly in the embryonic heart at 11.5 dpc. Expressed in the adult heart. Expressed in endothelial cells and cardiomyocytes and weakly expressed in fibroblasts.

The protein resides in the secreted. It localises to the extracellular space. Its function is as follows. Peptide hormone that functions as endogenous ligand for the G-protein-coupled apelin receptor (APLNR/APJ). Functions as a balanced agonist activating both G(i) protein pathway and beta-arrestin pathway of APLNR. Downstream G proteins activation, apelin can inhibit cAMP production and activate key intracellular effectors such as ERKs. On the other hand, APLNR activation induces beta-arrestin recruitment to the membrane leading to desensitization and internalization of the receptor. Apelin also blunts mechanical stretch-induced hypertrophic induction from APLNR. Apelin-36 dissociates more hardly than (pyroglu)apelin-13 from APLNR. Involved in the regulation of cardiac precursor cell movements during gastrulation and heart morphogenesis. Has an inhibitory effect on cytokine production in response to T-cell receptor/CD3 cross-linking; the oral intake of apelin in the colostrum and the milk might therefore modulate immune responses in neonates. Plays a role in early coronary blood vessels formation. Mediates myocardial contractility in an ERK1/2-dependent manner. May also have a role in the central control of body fluid homeostasis by influencing vasopressin release and drinking behavior. In Mus musculus (Mouse), this protein is Apelin.